The sequence spans 645 residues: MNHKRIALNYFYFSMWTGLSGAALATMIRLEMAYPGSPFFKGDSIKYLQVATAHGLIMVFFVVVPIFFGGFANFLIPYHVGSKDVAFPRLNSIGFWIQPLGFLLVAKIAFLRTTSWKYYDKTSFFLQPYNKSLYRDFFNFLTGELSFNPFKKSLDESLFLFLWKPRKKITNTEYTSFFFNPLNLSFLDSFFYYSDNLWSLANKVVSSRRKKIYVTKCSNRAAVTAGWTFITPFSSNMKYSGFGAQDVLSVAVVLAGISTTISLLTLITRRTLVAPGLRNRRVLIPFITISLLLTLRLLAIVTPILGAAVLMSLMDRHWQTSFFDFAYGGDPILFQHLFWFFGHPEVYILIIPSFGVANIVLPFYTMRRMSSKHHMIWAVYVMAYMGFVVWGHHMYLVGLDHRSRNIYSTITIMICLPATIKLVNWTLTLANAAIHVDLVFLFFCSYVFFFLTGGFTGMWLSHVGLNISVHDTFYVVAHFHLMLAGAAMMGAFTGLYYYYNTFFDVQYSKIFGFLHLVYYSAGIWTTFFPMFFLGFSGLPRRIHDFPAFFLGWHGLASCGHFLTLAGVCFFFFGIFDSTSENKSSILANFGIPKIAKRAHLYFFKISYNNYTNEIASELPKVEVRKFIIENTFGEYECVKLVPVTK.

The chain crosses the membrane as a helical span at residues 8–28; it reads LNYFYFSMWTGLSGAALATMI. Ca(2+) contacts are provided by Glu-31 and Gly-36. Residue His-54 coordinates Fe(II)-heme a. 8 helical membrane-spanning segments follow: residues 56–76, 90–110, 247–267, 282–302, 337–357, 376–396, 410–430, and 438–458; these read LIMVFFVVVPIFFGGFANFLI, LNSIGFWIQPLGFLLVAKIAF, VLSVAVVLAGISTTISLLTLI, VLIPFITISLLLTLRLLAIVT, LFWFFGHPEVYILIIPSFGVA, IWAVYVMAYMGFVVWGHHMYL, ITIMICLPATIKLVNWTLTLA, and LVFLFFCSYVFFFLTGGFTGM. His-343 is a Cu cation binding site. The 1'-histidyl-3'-tyrosine (His-Tyr) cross-link spans 343–347; that stretch reads HPEVY. Tyr-347 is a binding site for O2. Residues His-392 and His-393 each coordinate Cu cation. Residues His-470 and Asp-471 each contribute to the Mg(2+) site. A run of 3 helical transmembrane segments spans residues 475 to 495, 513 to 533, and 555 to 575; these read VVAHFHLMLAGAAMMGAFTGL, FLHLVYYSAGIWTTFFPMFFL, and LASCGHFLTLAGVCFFFFGIF. His-478 lines the heme a3 pocket. His-480 contacts Fe(II)-heme a.

The protein belongs to the heme-copper respiratory oxidase family. As to quaternary structure, component of the cytochrome c oxidase (complex IV, CIV), a multisubunit enzyme composed of a catalytic core of 3 subunits and several supernumerary subunits. The complex exists as a monomer or a dimer and forms supercomplexes (SCs) in the inner mitochondrial membrane with ubiquinol-cytochrome c oxidoreductase (cytochrome b-c1 complex, complex III, CIII). Requires heme as cofactor. The cofactor is Cu cation.

The protein resides in the mitochondrion inner membrane. The enzyme catalyses 4 Fe(II)-[cytochrome c] + O2 + 8 H(+)(in) = 4 Fe(III)-[cytochrome c] + 2 H2O + 4 H(+)(out). It participates in energy metabolism; oxidative phosphorylation. Component of the cytochrome c oxidase, the last enzyme in the mitochondrial electron transport chain which drives oxidative phosphorylation. The respiratory chain contains 3 multisubunit complexes succinate dehydrogenase (complex II, CII), ubiquinol-cytochrome c oxidoreductase (cytochrome b-c1 complex, complex III, CIII) and cytochrome c oxidase (complex IV, CIV), that cooperate to transfer electrons derived from NADH and succinate to molecular oxygen, creating an electrochemical gradient over the inner membrane that drives transmembrane transport and the ATP synthase. Cytochrome c oxidase is the component of the respiratory chain that catalyzes the reduction of oxygen to water. Electrons originating from reduced cytochrome c in the intermembrane space (IMS) are transferred via the dinuclear copper A center (CU(A)) of subunit 2 and heme A of subunit 1 to the active site in subunit 1, a binuclear center (BNC) formed by heme A3 and copper B (CU(B)). The BNC reduces molecular oxygen to 2 water molecules using 4 electrons from cytochrome c in the IMS and 4 protons from the mitochondrial matrix. This Paramecium tetraurelia protein is Cytochrome c oxidase subunit 1 (COI).